A 723-amino-acid chain; its full sequence is Nicastrin (723 aa).

The signal sequence occupies residues 1–16 (MKKWLVIVLIIAGIRC). At 17 to 678 (DGFSDQVFRT…ESVNLYLMED (662 aa)) the chain is on the extracellular side. Residues N40, N181, N271, N328, N409, and N627 are each glycosylated (N-linked (GlcNAc...) asparagine). The helical transmembrane segment at 679–699 (ASFEYTMILIAVISALLSIFA) threads the bilayer. The Cytoplasmic portion of the chain corresponds to 700-723 (VGRCSETTFIVDEGEPAAEGGEPL).

Belongs to the nicastrin family. As to quaternary structure, component of the gamma-secretase complex, a complex probably composed of the presenilin homodimer (sel-12, hop-1 or spe-4), nicastrin (aph-2), aph-1 and pen-2.

The protein localises to the membrane. In terms of biological role, essential subunit of the gamma-secretase complex, an endoprotease complex that catalyzes the intramembrane cleavage of integral membrane proteins such as Notch (glp-1 or lin-12). It may represents a stabilizing cofactor required for the assembly of the gamma-secretase complex. The sequence is that of Nicastrin (aph-2) from Caenorhabditis elegans.